The chain runs to 579 residues: 6-deoxy-6-sulfo-D-gluconate dehydratase (579 aa).

3 residues coordinate [4Fe-4S] cluster: C59, C127, and C200.

It belongs to the IlvD/Edd family. In terms of assembly, homodimer. [4Fe-4S] cluster serves as cofactor.

The enzyme catalyses 6-deoxy-6-sulfo-D-gluconate = 2-dehydro-3,6-dideoxy-6-sulfo-D-gluconate + H2O. Its function is as follows. Catalyzes the dehydration of 6-deoxy-6-sulfo-D-gluconate to 2-dehydro-3,6-dideoxy-6-sulfo-D-gluconate. Is involved in a degradation pathway of sulfoquinovose (SQ) that allows P.putida SQ1 to use SQ as the sole carbon and energy source for growth. The protein is 6-deoxy-6-sulfo-D-gluconate dehydratase of Pseudomonas putida (Arthrobacter siderocapsulatus).